Reading from the N-terminus, the 298-residue chain is Small ribosomal subunit biogenesis GTPase RsgA (298 aa).

The region spanning 67-228 (TNELVRPPIS…IADTPGFSSL (162 aa)) is the CP-type G domain. GTP is bound by residues 116-119 (TKMD) and 171-179 (GQSGVGKSS). Zn(2+) contacts are provided by Cys-252, Cys-257, His-259, and Cys-265.

Belongs to the TRAFAC class YlqF/YawG GTPase family. RsgA subfamily. As to quaternary structure, monomer. Associates with 30S ribosomal subunit, binds 16S rRNA. The cofactor is Zn(2+).

Its subcellular location is the cytoplasm. Its function is as follows. One of several proteins that assist in the late maturation steps of the functional core of the 30S ribosomal subunit. Helps release RbfA from mature subunits. May play a role in the assembly of ribosomal proteins into the subunit. Circularly permuted GTPase that catalyzes slow GTP hydrolysis, GTPase activity is stimulated by the 30S ribosomal subunit. This chain is Small ribosomal subunit biogenesis GTPase RsgA, found in Bacillus pumilus (strain SAFR-032).